A 386-amino-acid chain; its full sequence is Nucleosome assembly protein 1-like 4 (386 aa).

The disordered stretch occupies residues Met1 to Thr28. Ala2 bears the N-acetylalanine mark. A phosphoserine mark is found at Ser5, Ser7, and Ser49. At Thr51 the chain carries Phosphothreonine. Phosphoserine occurs at positions 53 and 54. Thr58 is modified (phosphothreonine). Position 105 is an N6-acetyllysine (Lys105). Ser125 bears the Phosphoserine mark. An N6-acetyllysine modification is found at Lys146. The Nuclear localization signal motif lies at Ile265–His271. Ser304 is subject to Phosphoserine. Residues Ala339–Asp370 are compositionally biased toward acidic residues. The tract at residues Ala339–Gln386 is disordered.

It belongs to the nucleosome assembly protein (NAP) family. As to quaternary structure, interacts with core (H2A, H2B, H3, H4) and linker (H1) histones. Post-translationally, polyglutamylated and polyglycylated. These 2 modifications occur exclusively on glutamate residues and result in either polyglutamate or polyglycine chains on the gamma-carboxyl group. Both modifications can coexist on the same protein on adjacent residues, and lowering polyglycylation levels increases polyglutamylation, and reciprocally. Polyglutamylated by TTLL4. Phosphorylated at the G0/G1 boundary but it is not phosphorylated in S-phase. Phosphorylated protein remains in the cytoplasm in a complex with histones during the G0/G1 transition, whereas dephosphorylation triggers its transport into the nucleus at the G1/S-boundary.

The protein localises to the nucleus. Its subcellular location is the cytoplasm. Its function is as follows. Acts as a histone chaperone in nucleosome assembly. This is Nucleosome assembly protein 1-like 4 (Nap1l4) from Rattus norvegicus (Rat).